A 427-amino-acid chain; its full sequence is 3-phosphoshikimate 1-carboxyvinyltransferase (427 aa).

The 3-phosphoshikimate site is built by lysine 20, serine 21, and arginine 25. Lysine 20 contacts phosphoenolpyruvate. 2 residues coordinate phosphoenolpyruvate: glycine 92 and arginine 120. Positions 166, 168, 312, and 339 each coordinate 3-phosphoshikimate. Glutamine 168 is a phosphoenolpyruvate binding site. Catalysis depends on aspartate 312, which acts as the Proton acceptor. 2 residues coordinate phosphoenolpyruvate: arginine 343 and arginine 385.

The protein belongs to the EPSP synthase family. Monomer.

It is found in the cytoplasm. It carries out the reaction 3-phosphoshikimate + phosphoenolpyruvate = 5-O-(1-carboxyvinyl)-3-phosphoshikimate + phosphate. It functions in the pathway metabolic intermediate biosynthesis; chorismate biosynthesis; chorismate from D-erythrose 4-phosphate and phosphoenolpyruvate: step 6/7. Catalyzes the transfer of the enolpyruvyl moiety of phosphoenolpyruvate (PEP) to the 5-hydroxyl of shikimate-3-phosphate (S3P) to produce enolpyruvyl shikimate-3-phosphate and inorganic phosphate. This chain is 3-phosphoshikimate 1-carboxyvinyltransferase, found in Streptococcus pneumoniae (strain Hungary19A-6).